Reading from the N-terminus, the 395-residue chain is uncharacterized protein (395 aa).

The tract at residues 247–270 (GGTVVPPNPDQPNPTPPDSSSPNY) is disordered. Residues 252-265 (PPNPDQPNPTPPDS) show a composition bias toward pro residues.

This is an uncharacterized protein from Vibrio cholerae serotype O1 (strain ATCC 39315 / El Tor Inaba N16961).